The following is a 777-amino-acid chain: MPDNRQPRNRQPRIRSGNEPRSAPAMEPDGRGAWAHSRAALDRLEKLLRCSRCTNILREPVCLGGCEHIFCSNCVSDCIGTGCPVCYTPAWIQDLKINRQLDSMIQLCSKLRNLLHDNELSDLKEDKPRKSLFNDAGNKKNSIKMWFSPRSKKVRYVVSKASVQTQPAIKKDASAQQDSYEFVSPSPPADVSERAKKASARSGKKQKKKTLAEINQKWNLEAEKEDGEFDSKEESKQKLVSFCSQPSVISSPQINGEIDLLASGSLTESECFGSLTEVSLPLAEQIESPDTKSRNEVVTPEKVCKNYLTSKKSLPLENNGKRGHHNRLSSPISKRCRTSILSTSGDFVKQTVPSENIPLPECSSPPSCKRKVGGTSGRKNSNMSDEFISLSPGTPPSTLSSSSYRRVMSSPSAMKLLPNMAVKRNHRGETLLHIASIKGDIPSVEYLLQNGSDPNVKDHAGWTPLHEACNHGHLKVVELLLQHKALVNTTGYQNDSPLHDAAKNGHVDIVKLLLSYGASRNAVNIFGLRPVDYTDDESMKSLLLLPEKNESSSASHCSVMNTGQRRDGPLVLIGSGLSSEQQKMLSELAVILKAKKYTEFDSTVTHVVVPGDAVQSTLKCMLGILNGCWILKFEWVKACLRRKVCEQEEKYEIPEGPRRSRLNREQLLPKLFDGCYFYLWGTFKHHPKDNLIKLVTAGGGQILSRKPKPDSDVTQTINTVAYHARPDSDQRFCTQYIIYEDLCNYHPERVRQGKVWKAPSSWFIDCVMSFELLPLDS.

Positions 1–32 (MPDNRQPRNRQPRIRSGNEPRSAPAMEPDGRG) are disordered. Residues 26–119 (MEPDGRGAWA…KLRNLLHDNE (94 aa)) are interaction with BRCA1. An RING-type zinc finger spans residues 50 to 87 (CSRCTNILREPVCLGGCEHIFCSNCVSDCIGTGCPVCY). Glycyl lysine isopeptide (Lys-Gly) (interchain with G-Cter in SUMO2) cross-links involve residues lysine 160 and lysine 170. The segment at 167–211 (PAIKKDASAQQDSYEFVSPSPPADVSERAKKASARSGKKQKKKTL) is disordered. Serine 186 carries the phosphoserine modification. The span at 197-209 (KASARSGKKQKKK) shows a compositional bias: basic residues. The residue at position 299 (threonine 299) is a Phosphothreonine. Residues 356–404 (NIPLPECSSPPSCKRKVGGTSGRKNSNMSDEFISLSPGTPPSTLSSSSY) form a disordered region. Residues 389–404 (SLSPGTPPSTLSSSSY) are compositionally biased toward low complexity. Position 391 is a phosphoserine (serine 391). Threonine 394 carries the phosphothreonine modification. Residue lysine 423 forms a Glycyl lysine isopeptide (Lys-Gly) (interchain with G-Cter in SUMO2) linkage. ANK repeat units follow at residues 427-459 (RGET…VKDH), 460-492 (AGWT…TTGY), and 493-525 (QNDS…AVNI). An ANK 4; degenerate repeat occupies 526–546 (FGLRPVDYTDDESMKSLLLLP). A Glycyl lysine isopeptide (Lys-Gly) (interchain with G-Cter in SUMO2) cross-link involves residue lysine 548. Positions 554–558 (ASHCS) are flexible linker. 2 consecutive BRCT domains span residues 560-653 (MNTG…KYEI) and 667-777 (LLPK…PLDS).

Homo- and heterodimer. Heterodimer (RING-type zinc finger) with BRCA1. Heterodimer (via ANK repeats and BRCT domains) with CSTF1/CSTF-50. Component of the BRCA1-A complex, at least composed of the BRCA1, BARD1, UIMC1/RAP80, ABRAXAS1, BRCC3/BRCC36, BABAM2 and BABAM1/NBA1. Interacts with UBXN1. Processed during apoptosis. The homodimer is more susceptible to proteolytic cleavage than the BARD1/BRCA1 heterodimer.

The protein resides in the nucleus. The catalysed reaction is S-ubiquitinyl-[E2 ubiquitin-conjugating enzyme]-L-cysteine + [acceptor protein]-L-lysine = [E2 ubiquitin-conjugating enzyme]-L-cysteine + N(6)-ubiquitinyl-[acceptor protein]-L-lysine.. It functions in the pathway protein modification; protein ubiquitination. Functionally, E3 ubiquitin-protein ligase. The BRCA1-BARD1 heterodimer specifically mediates the formation of 'Lys-6'-linked polyubiquitin chains and coordinates a diverse range of cellular pathways such as DNA damage repair, ubiquitination and transcriptional regulation to maintain genomic stability. Plays a central role in the control of the cell cycle in response to DNA damage. Acts by mediating ubiquitin E3 ligase activity that is required for its tumor suppressor function. Also forms a heterodimer with CSTF1/CSTF-50 to modulate mRNA processing and RNAP II stability by inhibiting pre-mRNA 3' cleavage. The chain is BRCA1-associated RING domain protein 1 (BARD1) from Homo sapiens (Human).